We begin with the raw amino-acid sequence, 457 residues long: MSNLTPREIVSELDKFIIGQSDAKRMVAIAMRNRWRRQQLPPELRDEIAPKNIIMMGPTGVGKTEIARRLAKLAGCPFFKVEATKFTEVGYVGRDVESMVRDLMEIGINLVRKEEMEKVKVKAEKHAEDALLDILLPSSKPKQPGMGFFNPAAPEEQEEQPSADQSSTREKFRKMWREGKLDDREVEIEVSVQGGGVEIMSMPGMEDMGMQVNDMIGKMFPNKKKMRKVKIREAYDILIQQESDKLIDMDNVAELARERVEQGGILFLDEIDKIAGNQEGGGSANVSREGVQRDLLPVVEGCVVNTKYGMVKTDHILFISAGAFSYAKPSDLIPELQGRFPLRVELTSLDKDDFYRILTEPQNALTVQYKALLETENLNIDFSREALEEVALNAQKFNEETENIGARRLYTIMEKILSDLSFEAPDRSGDSIVIDKEYVQKQLQDVTEDRDLSRYIL.

Residues Ile18 and 60–65 contribute to the ATP site; that span reads GVGKTE. The segment at 142–171 is disordered; that stretch reads KQPGMGFFNPAAPEEQEEQPSADQSSTREK. 3 residues coordinate ATP: Asp269, Glu335, and Arg407.

Belongs to the ClpX chaperone family. HslU subfamily. A double ring-shaped homohexamer of HslV is capped on each side by a ring-shaped HslU homohexamer. The assembly of the HslU/HslV complex is dependent on binding of ATP.

It localises to the cytoplasm. In terms of biological role, ATPase subunit of a proteasome-like degradation complex; this subunit has chaperone activity. The binding of ATP and its subsequent hydrolysis by HslU are essential for unfolding of protein substrates subsequently hydrolyzed by HslV. HslU recognizes the N-terminal part of its protein substrates and unfolds these before they are guided to HslV for hydrolysis. The polypeptide is ATP-dependent protease ATPase subunit HslU (Maridesulfovibrio salexigens (strain ATCC 14822 / DSM 2638 / NCIMB 8403 / VKM B-1763) (Desulfovibrio salexigens)).